Here is a 249-residue protein sequence, read N- to C-terminus: Cytochrome c oxidase subunit 2 (249 aa).

A run of 2 helical transmembrane segments spans residues 40–60 (NIMF…YTIT) and 81–101 (IIWT…SFIL). Residues His-184, Cys-219, Glu-221, Cys-223, His-227, and Met-230 each coordinate Cu cation. Glu-221 provides a ligand contact to Mg(2+).

This sequence belongs to the cytochrome c oxidase subunit 2 family. In terms of assembly, component of the cytochrome c oxidase (complex IV, CIV), a multisubunit enzyme composed of a catalytic core of 3 subunits and several supernumerary subunits. The complex exists as a monomer or a dimer and forms supercomplexes (SCs) in the inner mitochondrial membrane with ubiquinol-cytochrome c oxidoreductase (cytochrome b-c1 complex, complex III, CIII). Requires Cu cation as cofactor.

The protein resides in the mitochondrion inner membrane. The catalysed reaction is 4 Fe(II)-[cytochrome c] + O2 + 8 H(+)(in) = 4 Fe(III)-[cytochrome c] + 2 H2O + 4 H(+)(out). Its function is as follows. Component of the cytochrome c oxidase, the last enzyme in the mitochondrial electron transport chain which drives oxidative phosphorylation. The respiratory chain contains 3 multisubunit complexes succinate dehydrogenase (complex II, CII), ubiquinol-cytochrome c oxidoreductase (cytochrome b-c1 complex, complex III, CIII) and cytochrome c oxidase (complex IV, CIV), that cooperate to transfer electrons derived from NADH and succinate to molecular oxygen, creating an electrochemical gradient over the inner membrane that drives transmembrane transport and the ATP synthase. Cytochrome c oxidase is the component of the respiratory chain that catalyzes the reduction of oxygen to water. Electrons originating from reduced cytochrome c in the intermembrane space (IMS) are transferred via the dinuclear copper A center (CU(A)) of subunit 2 and heme A of subunit 1 to the active site in subunit 1, a binuclear center (BNC) formed by heme A3 and copper B (CU(B)). The BNC reduces molecular oxygen to 2 water molecules using 4 electrons from cytochrome c in the IMS and 4 protons from the mitochondrial matrix. This is Cytochrome c oxidase subunit 2 (COX2) from Vanderwaltozyma polyspora (strain ATCC 22028 / DSM 70294 / BCRC 21397 / CBS 2163 / NBRC 10782 / NRRL Y-8283 / UCD 57-17) (Kluyveromyces polysporus).